We begin with the raw amino-acid sequence, 461 residues long: Cysteine--tRNA ligase (461 aa).

Position 30 (Cys30) interacts with Zn(2+). Positions 32 to 42 (VTIYDLCHIGH) match the 'HIGH' region motif. Zn(2+) contacts are provided by Cys211, His236, and Glu240. The short motif at 268–272 (KMSKS) is the 'KMSKS' region element. Residue Lys271 coordinates ATP.

It belongs to the class-I aminoacyl-tRNA synthetase family. In terms of assembly, monomer. Requires Zn(2+) as cofactor.

It is found in the cytoplasm. The catalysed reaction is tRNA(Cys) + L-cysteine + ATP = L-cysteinyl-tRNA(Cys) + AMP + diphosphate. The polypeptide is Cysteine--tRNA ligase (Shewanella putrefaciens (strain CN-32 / ATCC BAA-453)).